The sequence spans 133 residues: Small ribosomal subunit protein uS19 (133 aa).

It belongs to the universal ribosomal protein uS19 family.

Its function is as follows. Protein S19 forms a complex with S13 that binds strongly to the 16S ribosomal RNA. The sequence is that of Small ribosomal subunit protein uS19 from Thermococcus gammatolerans (strain DSM 15229 / JCM 11827 / EJ3).